We begin with the raw amino-acid sequence, 282 residues long: Probable aquaporin PIP2-6 (282 aa).

The next 2 helical transmembrane spans lie at 39-59 and 76-96; these read ALIA…ATVI and LGIA…TAGI. Positions 102–104 match the NPA 1 motif; the sequence is NPA. Helical transmembrane passes span 121–141, 163–183, and 197–217; these read VMYI…VKGI, GTAL…VFSA, and VLAP…TIPI. The NPA 2 motif lies at 223–225; the sequence is NPA. The chain crosses the membrane as a helical span at residues 245-265; that stretch reads IFWAGPFIGALAAAAYHQYIL.

Belongs to the MIP/aquaporin (TC 1.A.8) family. PIP (TC 1.A.8.11) subfamily. As to expression, expressed in roots and leaves.

The protein resides in the cell membrane. Functionally, aquaporins facilitate the transport of water and small neutral solutes across cell membranes. In Oryza sativa subsp. japonica (Rice), this protein is Probable aquaporin PIP2-6 (PIP2-6).